Here is a 434-residue protein sequence, read N- to C-terminus: Guanosine-inosine kinase (434 aa).

GMP contacts are provided by residues 40–45, 93–97, and Arg198; these read DQTLVD and GTIGN. Residues 284–289, Gly357, and Asn402 each bind ATP; that span reads TAGPIG.

Belongs to the carbohydrate kinase PfkB family. It depends on Mg(2+) as a cofactor.

The catalysed reaction is guanosine + ATP = GMP + ADP + H(+). It carries out the reaction inosine + ATP = IMP + ADP + H(+). The protein operates within purine metabolism; IMP biosynthesis via salvage pathway; IMP from inosine: step 1/1. It participates in purine metabolism; GMP biosynthesis via salvage pathway. Functionally, catalyzes the phosphorylation of guanosine and inosine to GMP and IMP, respectively. In Escherichia coli O157:H7, this protein is Guanosine-inosine kinase.